We begin with the raw amino-acid sequence, 2227 residues long: Genome polyprotein (2227 aa).

2 consecutive short sequence motifs ((L)YPX(n)L motif) follow at residues 167 to 171 (YPHGL) and 200 to 205 (YPVWEL). Residues 766 to 836 (MMSRIAAGDL…PRKMKGLFSQ (71 aa)) form an involved in P1-2A pentamerization region. Residues 1010-1030 (VTVEIINTVLCFVKSGILLYV) traverse the membrane as a helical segment. The tract at residues 1043–1070 (IGLLRVMNYADIGCSVISCGKVFSKMLE) is membrane-penetrating ability. The stretch at 1127-1152 (KKKDVLNVLKDNQQKIERAIEEADNF) forms a coiled coil. One can recognise an SF3 helicase domain in the interval 1204–1366 (HQKLKNLGSI…SFFKNPHNDM (163 aa)). 1230–1237 (GKRGGGKS) contacts ATP. The helical transmembrane segment at 1462 to 1482 (WVAVGAAVGILGVLVGGWFVY) threads the bilayer. Position 1499 is an O-(5'-phospho-RNA)-tyrosine (Y1499). Residues 1514–1728 (DPVESQSTLE…VAKLVTQEMF (215 aa)) form the Peptidase C3 domain. Catalysis depends on for protease 3C activity residues H1563, D1603, and C1691. A RdRp catalytic domain is found at 1976–2097 (DVGLDLDFSA…VFSRDIQIDN (122 aa)). The active-site For RdRp activity is D2083.

The protein belongs to the picornaviridae polyprotein family. Homodimer. Homomultimer; probably interacts with membranes in a multimeric form. Seems to assemble into amyloid-like fibers. As to quaternary structure, homodimer. Monomer. Interacts with protein 3CD. In terms of assembly, interacts with host ACBD3. Interacts with protein 3AB. As to quaternary structure, interacts with human MAVS. In terms of assembly, homodimer; disulfide-linked. Homopentamer. Homooligomer. As to quaternary structure, interacts with capsid protein VP2. Interacts with capsid protein VP3. In terms of assembly, interacts with capsid protein VP1. Interacts with capsid protein VP3. Interacts with capsid protein VP1. Interacts with capsid protein VP2. Post-translationally, specific enzymatic cleavages by viral protease in vivo yield a variety of precursors and mature proteins. Polyprotein processing intermediates are produced, such as P1-2A which is a functional precursor of the structural proteins, VP0 which is a VP4-VP2 precursor, VP1-2A precursor, 3ABC precursor which is a stable and catalytically active precursor of 3A, 3B and 3C proteins, 3AB and 3CD precursors. The assembly signal 2A is removed from VP1-2A by a host protease, possibly host Cathepsin L. This cleavage occurs over a region of 3 amino-acids probably generating VP1 proteins with heterogeneous C-termini. During virion maturation, immature virions are rendered infectious following cleavage of VP0 into VP4 and VP2. This maturation seems to be an autocatalytic event triggered by the presence of RNA in the capsid and is followed by a conformational change of the particle. In terms of processing, the assembly signal 2A is removed from VP1-2A by a host protease, possibly host Cathepsin L in naked virions. This cleavage does not occur in enveloped virions. This cleavage occurs over a region of 3 amino-acids probably generating VP1 proteins with heterogeneous C-termini. Post-translationally, VPg is uridylylated prior to priming replication into VPg-pUpU. Unlike other picornaviruses, does not seem to be myristoylated.

Its subcellular location is the virion. It localises to the host endosome. It is found in the host multivesicular body. The protein resides in the host membrane. The protein localises to the host mitochondrion outer membrane. Its subcellular location is the host cytoplasm. It localises to the host cytoplasmic vesicle membrane. It carries out the reaction RNA(n) + a ribonucleoside 5'-triphosphate = RNA(n+1) + diphosphate. It catalyses the reaction a ribonucleoside 5'-triphosphate + H2O = a ribonucleoside 5'-diphosphate + phosphate + H(+). The enzyme catalyses Selective cleavage of Gln-|-Gly bond in the poliovirus polyprotein. In other picornavirus reactions Glu may be substituted for Gln, and Ser or Thr for Gly.. Functionally, capsid proteins VP1, VP2, and VP3 form a closed capsid enclosing the viral positive strand RNA genome. All these proteins contain a beta-sheet structure called beta-barrel jelly roll. Together they form an icosahedral capsid (T=3) composed of 60 copies of each VP1, VP2, and VP3, with a diameter of approximately 300 Angstroms. VP1 is situated at the 12 fivefold axes, whereas VP2 and VP3 are located at the quasi-sixfold axes. The naked capsid interacts with the host receptor HAVCR1 to provide virion attachment to and probably entry into the target cell. VP0 precursor is a component of the immature procapsids. Its function is as follows. Plays a role in the assembly of the 12 pentamers into an icosahedral structure. Has not been detected in mature virions, supposedly owing to its small size. In terms of biological role, precursor component of immature procapsids that corresponds to an extended form of the structural protein VP1. After maturation, possibly by the host Cathepsin L, the assembly signal 2A is cleaved to give rise to the mature VP1 protein. Functionally, functions as a viroporin. Affects membrane integrity and causes an increase in membrane permeability. Involved in host intracellular membrane rearrangements probably to give rise to the viral factories. Does not disrupt calcium homeostasis or glycoprotein trafficking. Antagonizes the innate immune response of the host by suppressing IFN-beta synthesis, which it achieves by interfering with the RIG-I/IFIH1 pathway. Affects membrane integrity and causes an increase in membrane permeability. Its function is as follows. Associates with and induces structural rearrangements of intracellular membranes. Displays RNA-binding activity. In terms of biological role, the precursor 3ABC is targeted to the mitochondrial membrane where protease 3C activity cleaves and inhibits the host antiviral protein MAVS, thereby disrupting activation of IRF3 through the IFIH1/MDA5 pathway. In vivo, the protease activity of 3ABC precursor is more efficient in cleaving the 2BC precursor than that of protein 3C. The 3ABC precursor may therefore play a role in the proteolytic processing of the polyprotein. Possible viroporin. Functionally, interacts with the 3CD precursor and with RNA structures found at both the 5'- and 3'-termini of the viral genome. Since the 3AB precursor contains the hydrophobic domain 3A, it probably anchors the whole viral replicase complex to intracellular membranes on which viral RNA synthesis occurs. May serve as membrane anchor to the 3AB and 3ABC precursors via its hydrophobic domain. May interact with RNA. Its function is as follows. Acts as a primer for viral RNA replication and remains covalently bound to viral genomic RNA. VPg is uridylylated prior to priming replication into VPg-pUpU. The VPg-pUpU is then used as primer on the genomic RNA poly(A) by the RNA-dependent RNA polymerase to replicate the viral genome. In terms of biological role, cysteine protease that generates mature viral proteins from the precursor polyprotein. In addition to its proteolytic activity, it binds to viral RNA, and thus influences viral genome replication. RNA and substrate bind cooperatively to the protease. Cleaves IKBKG/NEMO to impair innate immune signaling. Cleaves host PABPC1 which may participate in the switch of viral translation to RNA synthesis. Functionally, interacts with the 3AB precursor and with RNA structures found at both the 5'- and 3'-termini of the viral genome. Disrupts TLR3 signaling by degrading the host adapter protein TICAM1/TRIF. RNA-directed RNA polymerase 3D-POL replicates genomic and antigenomic RNA by recognizing replications specific signals. The protein is Genome polyprotein of Human hepatitis A virus genotype IIB (isolate SLF88) (HHAV).